The primary structure comprises 1077 residues: ATP-dependent helicase/deoxyribonuclease subunit B (1077 aa).

It belongs to the helicase family. AddB/RexB type 2 subfamily. Heterodimer of AddA and RexB. Mg(2+) serves as cofactor.

Its function is as follows. The heterodimer acts as both an ATP-dependent DNA helicase and an ATP-dependent, dual-direction single-stranded exonuclease. Recognizes the chi site generating a DNA molecule suitable for the initiation of homologous recombination. This subunit has 5' -&gt; 3' nuclease activity but not helicase activity. This is ATP-dependent helicase/deoxyribonuclease subunit B from Streptococcus agalactiae serotype III (strain NEM316).